We begin with the raw amino-acid sequence, 471 residues long: UDP-N-acetylmuramate--L-alanine ligase (471 aa).

ATP is bound at residue 114–120 (GTHGKTT).

It belongs to the MurCDEF family.

The protein resides in the cytoplasm. It catalyses the reaction UDP-N-acetyl-alpha-D-muramate + L-alanine + ATP = UDP-N-acetyl-alpha-D-muramoyl-L-alanine + ADP + phosphate + H(+). It participates in cell wall biogenesis; peptidoglycan biosynthesis. Cell wall formation. The polypeptide is UDP-N-acetylmuramate--L-alanine ligase (Rhizobium johnstonii (strain DSM 114642 / LMG 32736 / 3841) (Rhizobium leguminosarum bv. viciae)).